The primary structure comprises 166 residues: Short form salivary protein D7R5 (166 aa).

An N-terminal signal peptide occupies residues Met-1–Ala-22. Cystine bridges form between Cys-26–Cys-58, Cys-39–Cys-166, and Cys-98–Cys-117.

The protein belongs to the PBP/GOBP family.

Its subcellular location is the secreted. Its function is as follows. In contrast to the related D7 salivary proteins, does not bind biogenic amines such as serotonin, noradrenaline, histamine and adrenaline. It is hypothesized that either D7r5 evolved an as yet unknown function or is becoming a pseudogene. The sequence is that of Short form salivary protein D7R5 from Anopheles gambiae (African malaria mosquito).